The chain runs to 562 residues: Proton channel OTOP2 (562 aa).

The tract at residues 1–20 (MSEELAQGPKESPPAPRAGP) is disordered. 12 helical membrane passes run 30 to 50 (LLSVLLAVNVLLLACTLISGG), 62 to 82 (VFALLTAMMLLATLWILFYLL), 100 to 120 (PIWLRGGLVLFGICTLIMDVF), 137 to 157 (ILHPLIQAVFVIIQTYFLWVS), 169 to 189 (TWCGLMFTLTTNLAIWMAAVV), 241 to 261 (FYLYPFNIEYSLFASTMLYVM), 289 to 309 (FFAGPVLGLLLFVVGLAVFII), 324 to 344 (ALVIYYSFNIVCLGLTTLVSL), 371 to 391 (LLMGAALGQYAISYYSIVAVV), 402 to 422 (LNLTHALLMIAQHTFQNMFII), 495 to 515 (DISLFLLLCNVILWIMPAFGA), and 527 to 547 (FYGYSLWAVIVNICLPFGIFY).

It belongs to the otopetrin family.

Its subcellular location is the cell membrane. It catalyses the reaction H(+)(in) = H(+)(out). With respect to regulation, actives at neutral and alkaline extracellular pH, acid extracellular pH appears to inhibit the channel. Insensitive to activation by Zn(2+). Proton-selective ion channel open at neutral pH. Actives at neutral and alkaline extracellular pH, likely participates in some alkali-related physiological activities. The polypeptide is Proton channel OTOP2 (Homo sapiens (Human)).